The following is a 565-amino-acid chain: Putative lipase ATG15 (565 aa).

At 1-21 the chain is on the cytoplasmic side; sequence MISNDYTKFSSKRRSLRYSNR. The chain crosses the membrane as a helical; Signal-anchor for type II membrane protein span at residues 22–42; that stretch reads ILLLMGTILLIVVYFYSDILV. The Lumenal portion of the chain corresponds to 43-565; sequence DKSIIMFRNE…EYTTFTKRLI (523 aa). N-linked (GlcNAc...) asparagine glycosylation is present at N217. Catalysis depends on S347, which acts as the Charge relay system. Positions 488-538 are disordered; that stretch reads KKPKKQTTSSSSEKVDTSTTKSIDRTTITTRTNEKKWHPNPKDPSTTTTDD. Over residues 493-518 the composition is skewed to low complexity; that stretch reads QTTSSSSEKVDTSTTKSIDRTTITTR. Residues 519-528 are compositionally biased toward basic and acidic residues; sequence TNEKKWHPNP.

Belongs to the AB hydrolase superfamily. Lipase family. As to quaternary structure, binds to both phosphatidylinositol (PI) and phosphatidylinositol 3,5-bisphosphate (PIP2).

It is found in the endosome. It localises to the multivesicular body membrane. The protein localises to the prevacuolar compartment membrane. It carries out the reaction a triacylglycerol + H2O = a diacylglycerol + a fatty acid + H(+). Functionally, lipase which is essential for lysis of subvacuolar cytoplasm to vacuole targeted bodies and intravacuolar autophagic bodies. Involved in the lysis of intravacuolar multivesicular body (MVB) vesicles. The intravacuolar membrane disintegration by ATG15 is critical to life span extension. This is Putative lipase ATG15 (ATG15) from Vanderwaltozyma polyspora (strain ATCC 22028 / DSM 70294 / BCRC 21397 / CBS 2163 / NBRC 10782 / NRRL Y-8283 / UCD 57-17) (Kluyveromyces polysporus).